The chain runs to 225 residues: Lectin (225 aa).

As to quaternary structure, homotetramer.

Its function is as follows. Chitin-binding lectin. Agglutinates rabbit erythrocytes, but not human erythrocytes. This Vachellia farnesiana (Sweet acacia) protein is Lectin.